Here is a 684-residue protein sequence, read N- to C-terminus: UvrABC system protein B (684 aa).

Residues 30-188 enclose the Helicase ATP-binding domain; it reads EGVQRGDRWQ…QELVSLHYVR (159 aa). 43-50 contributes to the ATP binding site; sequence GVTGSGKT. The Beta-hairpin motif lies at 96 to 119; it reads YYDFYQPEAYLPALDKYIAKDLRI. The Helicase C-terminal domain maps to 435 to 601; it reads QIDDLLGEIR…SIIKSVEQVL (167 aa). One can recognise a UVR domain in the interval 641–676; sequence YSMAESLRLEMQEAALKMEYEKAAYLRDEITKFEHR.

It belongs to the UvrB family. As to quaternary structure, forms a heterotetramer with UvrA during the search for lesions. Interacts with UvrC in an incision complex.

The protein localises to the cytoplasm. Functionally, the UvrABC repair system catalyzes the recognition and processing of DNA lesions. A damage recognition complex composed of 2 UvrA and 2 UvrB subunits scans DNA for abnormalities. Upon binding of the UvrA(2)B(2) complex to a putative damaged site, the DNA wraps around one UvrB monomer. DNA wrap is dependent on ATP binding by UvrB and probably causes local melting of the DNA helix, facilitating insertion of UvrB beta-hairpin between the DNA strands. Then UvrB probes one DNA strand for the presence of a lesion. If a lesion is found the UvrA subunits dissociate and the UvrB-DNA preincision complex is formed. This complex is subsequently bound by UvrC and the second UvrB is released. If no lesion is found, the DNA wraps around the other UvrB subunit that will check the other stand for damage. In Chlorobium limicola (strain DSM 245 / NBRC 103803 / 6330), this protein is UvrABC system protein B.